We begin with the raw amino-acid sequence, 71 residues long: Putative membrane protein insertion efficiency factor (71 aa).

It belongs to the UPF0161 family.

The protein resides in the cell membrane. Could be involved in insertion of integral membrane proteins into the membrane. The chain is Putative membrane protein insertion efficiency factor from Clostridium acetobutylicum (strain ATCC 824 / DSM 792 / JCM 1419 / IAM 19013 / LMG 5710 / NBRC 13948 / NRRL B-527 / VKM B-1787 / 2291 / W).